A 53-amino-acid chain; its full sequence is Mannose/glucose-specific lectin alpha 2 chain (53 aa).

It belongs to the leguminous lectin family. Tetramer of two alpha and two beta chains.

In Lathyrus ochrus (Cyprus-vetch), this protein is Mannose/glucose-specific lectin alpha 2 chain.